The sequence spans 353 residues: Chorismate synthase (353 aa).

NADP(+) is bound by residues Arg-48 and Arg-54. Residues 125–127 (RSS), 238–239 (NA), Gly-278, 293–297 (KPTSS), and Arg-319 contribute to the FMN site.

Belongs to the chorismate synthase family. As to quaternary structure, homotetramer. It depends on FMNH2 as a cofactor.

The catalysed reaction is 5-O-(1-carboxyvinyl)-3-phosphoshikimate = chorismate + phosphate. It functions in the pathway metabolic intermediate biosynthesis; chorismate biosynthesis; chorismate from D-erythrose 4-phosphate and phosphoenolpyruvate: step 7/7. Functionally, catalyzes the anti-1,4-elimination of the C-3 phosphate and the C-6 proR hydrogen from 5-enolpyruvylshikimate-3-phosphate (EPSP) to yield chorismate, which is the branch point compound that serves as the starting substrate for the three terminal pathways of aromatic amino acid biosynthesis. This reaction introduces a second double bond into the aromatic ring system. The protein is Chorismate synthase of Bordetella parapertussis (strain 12822 / ATCC BAA-587 / NCTC 13253).